The chain runs to 149 residues: Small ribosomal subunit protein uS13 (149 aa).

A disordered region spans residues 118–149 (GRRHELGLPVRGQRTKSTFRKGSSVGVRRKKR).

The protein belongs to the universal ribosomal protein uS13 family. Part of the 30S ribosomal subunit. Forms a loose heterodimer with protein S19. Forms two bridges to the 50S subunit in the 70S ribosome.

Located at the top of the head of the 30S subunit, it contacts several helices of the 16S rRNA. In the 70S ribosome it contacts the 23S rRNA (bridge B1a) and protein L5 of the 50S subunit (bridge B1b), connecting the 2 subunits; these bridges are implicated in subunit movement. This is Small ribosomal subunit protein uS13 from Methanothermobacter thermautotrophicus (strain ATCC 29096 / DSM 1053 / JCM 10044 / NBRC 100330 / Delta H) (Methanobacterium thermoautotrophicum).